We begin with the raw amino-acid sequence, 457 residues long: D-xylose transporter (457 aa).

10 helical membrane passes run 14–34 (ALGG…ILFI), 46–66 (GWVV…IGPS), 81–101 (IIFF…TLII), 104–124 (IILG…LAEL), 131–151 (GTVS…AYIT), 164–184 (WMLG…LILP), 244–264 (LIIG…TVLY), 281–301 (LLAH…AVAI), 309–329 (KIVN…SIGM), and 338–358 (AAII…ATWG). Beta-D-xylose is bound at residue glutamine 138. Residues 254–255 (QQ) and asparagine 260 each bind beta-D-xylose. Tryptophan 362 and asparagine 385 together coordinate beta-D-xylose. A run of 2 helical transmembrane segments spans residues 380-400 (FASV…PSLL) and 402-422 (FFGT…SIWF).

The protein belongs to the major facilitator superfamily. Sugar transporter (TC 2.A.1.1) family.

It is found in the cell membrane. Transport is inhibited by 6-deoxy-D-glucose. Functionally, uptake of D-xylose across the boundary membrane with the concomitant transport of protons into the cell (symport system). Transport is driven by the proton motive force generated by either malolactic fermentation or by the metabolism of D-glucose. The protein is D-xylose transporter of Levilactobacillus brevis (Lactobacillus brevis).